The chain runs to 421 residues: Threonine--tRNA ligase editing subunit (421 aa).

The protein belongs to the class-II aminoacyl-tRNA synthetase family. Archaea-specific ThrRS editing domain subfamily. As to quaternary structure, probably interacts with its catalytic subunit.

Its subcellular location is the cytoplasm. Its function is as follows. Freestanding tRNA editing subunit of threonine--tRNA ligase, the catalytic subunit is probably AC Q9YDW0. Deacylates (edits) mischarged L-seryl-tRNA(Thr) in trans; has no activity on correctly charged L-threonyl-tRNA(Thr). Probably does not aminoacylate tRNA(Thr). Deacylates correctly charged glycyl-tRNA(Gly), but not glycyl-tRNA(Gly)(2'-dA76) (the terminal 2'-OH of tRNA adenine 76 has been dehydroxylated) nor the 2'-fluoro tRNA derivative, strongly suggesting the editing function is catalyzed by the 2'-OH of A76 of tRNA(Thr). The protein is Threonine--tRNA ligase editing subunit (thrS2) of Aeropyrum pernix (strain ATCC 700893 / DSM 11879 / JCM 9820 / NBRC 100138 / K1).